A 905-amino-acid polypeptide reads, in one-letter code: Dopamine D2-like receptor (905 aa).

The segment at 1–23 is disordered; that stretch reads MLSPFDWRRGISSSGTGGTMAAQ. The Extracellular portion of the chain corresponds to 1 to 377; the sequence is MLSPFDWRRG…GELRVVDHNY (377 aa). Residues Asn88, Asn146, Asn156, Asn166, Asn174, Asn257, Asn314, and Asn343 are each glycosylated (N-linked (GlcNAc...) asparagine). A helical transmembrane segment spans residues 378-398; the sequence is WALILILFPILTLFGNILVIL. Residues 399-416 lie on the Cytoplasmic side of the membrane; it reads SVCRERSLQTVTNYFIVS. The chain crosses the membrane as a helical span at residues 417 to 437; the sequence is LAIADLLVAVVVMPFAVYFLV. Topologically, residues 438 to 450 are extracellular; it reads NGAWALPDVVCDF. A disulfide bridge links Cys448 with Cys525. A helical membrane pass occupies residues 451 to 471; that stretch reads YIAMDVICSTSSIFNLVAISI. Residues 472–493 lie on the Cytoplasmic side of the membrane; that stretch reads DRYIAVTQPIKYAKHKNSRRVC. A helical transmembrane segment spans residues 494-514; sequence LTILLVWAISAAIGSPIVLGL. Over 515-531 the chain is Extracellular; that stretch reads NNTPNREPDVCAFYNAD. A helical transmembrane segment spans residues 532–552; that stretch reads FILYSSLSSFYIPCIIMVFLY. Residues 553-830 are Cytoplasmic-facing; sequence WNIFKALRSR…AKKERKATKT (278 aa). Disordered regions lie at residues 600–631, 702–753, and 780–799; these read SRHASRILPDEAATNTASGSNEEEDENAISPD, ATSA…SVGV, and DSTLSTTSKTSSRKDKKNSQ. Positions 702-722 are enriched in low complexity; sequence ATSAAPRSSGSPPDSPLPSGA. The span at 723-734 shows a compositional bias: polar residues; that stretch reads TLQRSSVSSQRR. Positions 735–746 are enriched in basic and acidic residues; sequence PTGDDSPKRGEP. Residues 831 to 851 form a helical membrane-spanning segment; that stretch reads LAIVLGVFLFCWLPFFSCNIM. At 852–869 the chain is on the extracellular side; it reads DAMCAKFKKDCRPGLTAY. A helical membrane pass occupies residues 870–890; it reads MMTTWLGYINSFVNPVIYTIF. Residues 891–905 are Cytoplasmic-facing; the sequence is NPEFRKAFKKIMHMG.

Belongs to the G-protein coupled receptor 1 family. Highest expression is in adult heads.

The protein localises to the cell membrane. Receptor for dopamine. The activity of this receptor is mediated by G proteins which inhibit adenylyl cyclase. The sequence is that of Dopamine D2-like receptor from Drosophila melanogaster (Fruit fly).